The sequence spans 1035 residues: Cell-division control histidine kinase PdhS (1035 aa).

Residues 1–613 form an important for polar localization region; that stretch reads MSGSYPFIDI…HADGSEEPVD (613 aa). The tract at residues 500 to 533 is disordered; the sequence is QGLANTRAESETPVSETSSIEPVEPTPPVKTRSE. Residues 614 to 1035 form an interaction with DivK region; the sequence is AHLNAIAWRG…VFPPTRVLAD (422 aa). The PAS domain maps to 659 to 730; it reads HVEELKTILD…YLHGLSGNGV (72 aa). The Histidine kinase domain occupies 802-1031; that stretch reads RISHEIRTPL…VVEIVFPPTR (230 aa). His805 is modified (phosphohistidine; by autocatalysis).

Interacts with DivK.

The protein resides in the cytoplasm. The catalysed reaction is ATP + protein L-histidine = ADP + protein N-phospho-L-histidine.. In terms of biological role, functions as a polar differentiation marker. Essential protein that, by localizing in the old pole of dividing cells, controls cell division and maturation, probably through control of DivK phosphorylation status and cellular distribution, which in turn regulates CtrA, a transcriptional regulator of the minB operon. The asymmetrical localization of this protein is probably required for cells to enter a new division cycle. In Brucella abortus (strain S19), this protein is Cell-division control histidine kinase PdhS (pdhS).